Reading from the N-terminus, the 616-residue chain is MKRKLDANDVPSPEVAETKETSDADEADFESLNLDPRLRQALIKEKFTKPTPVQAKAIPLALAGKDILARAKTGSGKTAAYVLPILQTILQKKAADPSLKATTGLILVPTRELAEQVQKVVTTFAAFCGKDVRSVNLTQKVSEAVQRTMLSDYPDIVISTPARVIANLGNSSLSLDNLTHLVIDEADLVLSYGYDEDINALSKAIPRGVQTFLMSATLTSEVDTLKGLFCRSPVVLKLEDKEEKGAGVSQFVVKCAEDEKFLLTYVIFKLQLIKGKVIIFVGDIDRCYRLKLFLEQFGVKSCVLNSELPVNSRIHVVQEFNKGVYDIIIAADDQEVLGSKSKKAKNAGADEEEEAAGVMGSSDDEEAEDDKKSNRPDKRRKLTAKEKDYGISRGIDFQNVACVLNFDLPTTAKSYTHRIGRTGRGGKTGMALSFVVPADQYGKHKPTSFPTAKHDEAVLAKIVKRQSKHGHEVKPYHFEMSQVDAFRYRMTDGLRAITRLAVQEARAREIRQELVKSEKLKRHFEDNPDELRQLRHDGELRSARIQPHLKHIPEYLMPSKGRKGISSEDVGFVGFRKSSDNRIRKARDKNRAKGKGRKPSGVRKVDPLKTFNRGRK.

Residues 1–29 (MKRKLDANDVPSPEVAETKETSDADEADF) are disordered. Positions 27–55 (ADFESLNLDPRLRQALIKEKFTKPTPVQA) match the Q motif motif. Positions 58–236 (IPLALAGKDI…GLFCRSPVVL (179 aa)) constitute a Helicase ATP-binding domain. 71–78 (AKTGSGKT) is an ATP binding site. A DEAD box motif is present at residues 184 to 187 (DEAD). The region spanning 247 to 481 (GVSQFVVKCA…EVKPYHFEMS (235 aa)) is the Helicase C-terminal domain. Disordered regions lie at residues 340–385 (KSKK…LTAK) and 579–616 (SDNR…RGRK). Basic residues predominate over residues 584–601 (RKARDKNRAKGKGRKPSG).

This sequence belongs to the DEAD box helicase family. DDX56/DBP9 subfamily.

The protein localises to the nucleus. It localises to the nucleolus. The enzyme catalyses ATP + H2O = ADP + phosphate + H(+). Functionally, ATP-binding RNA helicase involved in the biogenesis of 60S ribosomal subunits and is required for the normal formation of 25S and 5.8S rRNAs. The polypeptide is ATP-dependent RNA helicase dbp9 (dbp9) (Aspergillus niger (strain ATCC MYA-4892 / CBS 513.88 / FGSC A1513)).